The primary structure comprises 313 residues: Small ribosomal subunit protein uS2 (313 aa).

Residues 234–243 (DEEAKEEKTK) show a composition bias toward basic and acidic residues. Residues 234–313 (DEEAKEEKTK…ASKAEAEEGK (80 aa)) form a disordered region. A compositionally biased stretch (basic residues) spans 244-256 (AKTTAKKVVTKKA). The span at 266-297 (AEKKSEKPTTEKRPTKEAAETKETSEEPKTKE) shows a compositional bias: basic and acidic residues.

The protein belongs to the universal ribosomal protein uS2 family.

In Coxiella burnetii (strain Dugway 5J108-111), this protein is Small ribosomal subunit protein uS2.